The primary structure comprises 662 residues: Probable quinol oxidase subunit 1 (662 aa).

Transmembrane regions (helical) follow at residues 14 to 34 (WMIT…IAVI) and 58 to 78 (IMYL…ALLI). His102 is a Fe(II)-heme a binding site. A run of 8 helical transmembrane segments spans residues 103-123 (GVIM…NIVV), 140-160 (VSFW…IIGG), 187-207 (IAIQ…FVTI), 228-248 (FITT…LALM), 273-293 (FFWV…FGIY), 311-331 (MVWA…HHFF), 336-356 (GALI…PTGV), and 376-396 (MLFS…GVML). 4 residues coordinate Cu cation: His279, Tyr283, His328, and His329. The segment at residues 279-283 (HPEVY) is a cross-link (1'-histidyl-3'-tyrosine (His-Tyr)). Residue His414 participates in heme a3 binding. Helical transmembrane passes span 415–435 (FHYT…IFWY), 451–471 (CFWF…ILGL), 493–513 (ISTI…VSIV), 587–604 (PVGF…FFLI), and 608–627 (VIPA…YRSF). His416 lines the Fe(II)-heme a pocket.

It belongs to the heme-copper respiratory oxidase family. The cofactor is Cu cation. Requires ferriheme a as cofactor. Heme A3. is required as a cofactor.

It is found in the cell membrane. The catalysed reaction is 2 a quinol + O2 = 2 a quinone + 2 H2O. The protein operates within energy metabolism; oxidative phosphorylation. In terms of biological role, catalyzes quinol oxidation with the concomitant reduction of oxygen to water. The polypeptide is Probable quinol oxidase subunit 1 (qoxB) (Staphylococcus aureus (strain MRSA252)).